The chain runs to 207 residues: MANVKLFDQTGKEVSTVELNDAIFGIEPNESVVFDVVISQRASLRQGTHAVKNRSAVSGGGRKPWRQKGTGRARQGSIRSPQWRGGGVVFGPTPRSYGYKLPQKVRRLALKSVYSAKVAEDKFVAVEALSFAAPKTAEFANVLSALSIDSKVLVIVEEGNKFAELSARNLANVTVATPATASVLDIVNADKLLVTKEAISSIEEVLA.

The disordered stretch occupies residues 49-78; it reads HAVKNRSAVSGGGRKPWRQKGTGRARQGSI.

It belongs to the universal ribosomal protein uL4 family. In terms of assembly, part of the 50S ribosomal subunit.

Functionally, one of the primary rRNA binding proteins, this protein initially binds near the 5'-end of the 23S rRNA. It is important during the early stages of 50S assembly. It makes multiple contacts with different domains of the 23S rRNA in the assembled 50S subunit and ribosome. Forms part of the polypeptide exit tunnel. The chain is Large ribosomal subunit protein uL4 from Streptococcus thermophilus (strain CNRZ 1066).